Here is a 153-residue protein sequence, read N- to C-terminus: D-erythrulose-4-phosphate isomerase 1 (153 aa).

Catalysis depends on Cys69, which acts as the Proton acceptor.

The protein belongs to the LacAB/RpiB family.

It catalyses the reaction D-erythrulose 4-phosphate = D-erythrose 4-phosphate. The protein operates within carbohydrate metabolism; erythritol degradation. Its pathway is carbohydrate metabolism; D-threitol degradation. In terms of biological role, catalyzes the isomerization of D-erythrulose-4P to D-erythrose-4P. Involved in the degradation pathways of erythritol and D-threitol, that allow M.smegmatis to grow on these compounds as the sole carbon source. The sequence is that of D-erythrulose-4-phosphate isomerase 1 from Mycolicibacterium smegmatis (strain ATCC 700084 / mc(2)155) (Mycobacterium smegmatis).